Reading from the N-terminus, the 484-residue chain is 1,4-beta-D-glucan cellobiohydrolase CEL6A (484 aa).

The N-terminal stretch at 1 to 17 (MAKRLLLTAALAATTLA) is a signal peptide. The CBM1 domain occupies 26-62 (NCGSVWSQCGGQGWTGATCCASGSTCVAQNQWYSQCL). Cystine bridges form between Cys-34-Cys-51 and Cys-45-Cys-61. The segment at 68–98 (TTTAQAPSSTRTTTSSSSRPTSSSISTSAVN) is disordered. Substrate contacts are provided by Trp-171 and Asp-173. The N-linked (GlcNAc...) asparagine glycan is linked to Asn-175. Positions 208–230 (YDLPDRDCAAAASNGEWAIADGG) are substrate binding loop 1. Asp-260 functions as the Proton donor in the catalytic mechanism. Residues His-305, Trp-308, Asn-344, Trp-405, Lys-433, and Glu-437 each coordinate substrate. The substrate binding loop 2 stretch occupies residues 431–469 (WIKPGGECDGTSDTTAARYDHHCGFADALKPAPEAGQWF). Asp-439 functions as the Proton acceptor in the catalytic mechanism.

The protein belongs to the glycosyl hydrolase 6 (cellulase B) family. As to quaternary structure, monomer. In terms of processing, both N- and O-glycosylated.

It is found in the secreted. The enzyme catalyses Hydrolysis of (1-&gt;4)-beta-D-glucosidic linkages in cellulose and cellotetraose, releasing cellobiose from the non-reducing ends of the chains.. In terms of biological role, exoglucanase that plays an important function in biomass degradation by catalyzing the hydrolysis of the non-reducing end beta-1,4-glucosidic linkages in cellulose and cellotetraose to release cellobiose. Hydrolyzes crystalline and amorphous cellulose but is inactive on hydroxyethyl cellulose, mannan, galactomannan, xyloglucan, arabinoxylan, arabinan, xylan, and pectin. The polypeptide is 1,4-beta-D-glucan cellobiohydrolase CEL6A (Podospora anserina (strain S / ATCC MYA-4624 / DSM 980 / FGSC 10383) (Pleurage anserina)).